We begin with the raw amino-acid sequence, 294 residues long: MITGIINLKKEAGMTSHDAVFKLRKILHTKKIGHGGTLDPDVVGVLPIAVGKATRVIEYMTESGKIYEGEITLGYATSTEDSSGEVISRTPLTQSDLSEDVVDHAMKSFTGPITQVPPMYSAVKVNGKKLYEYARSGEEVERPKRQITISEFRRTSPLYFEKGICRFSFYVSCSKGTYVRTLAVDLGIKLGYASHMSFLKRTSSAGLSITQSLTLEEINEKYKQEDFSFLLPIEYGVLDLPKVNLTEEDKVEISYGRRILLENEADTLAAFYENRVIAILEKRGNEFKPHKVLL.

Residue Asp39 is the Nucleophile of the active site.

The protein belongs to the pseudouridine synthase TruB family. Type 1 subfamily.

The catalysed reaction is uridine(55) in tRNA = pseudouridine(55) in tRNA. Responsible for synthesis of pseudouridine from uracil-55 in the psi GC loop of transfer RNAs. The sequence is that of tRNA pseudouridine synthase B from Streptococcus agalactiae serotype Ia (strain ATCC 27591 / A909 / CDC SS700).